Here is a 3410-residue protein sequence, read N- to C-terminus: Genome polyprotein (3410 aa).

At 1–103 (MTKKPGRPGR…DFVHLPKKKS (103 aa)) the chain is on the cytoplasmic side. The interaction with host EXOC1 stretch occupies residues 2–15 (TKKPGRPGRNRAVN). A hydrophobic; homodimerization of capsid protein C region spans residues 38-73 (LLDGRGPLRMVLAILAFFRFTALKPTAGLLKRWGMM). A propeptide spans 103–119 (SGVSIIGRMLVFSFTAA) (ER anchor for the capsid protein C, removed in mature form by serine protease NS3). Residues 104 to 124 (GVSIIGRMLVFSFTAAVRVTL) traverse the membrane as a helical segment. Topologically, residues 125–245 (ENGMSLMKIQ…ATSYLTKAES (121 aa)) are extracellular. The chain crosses the membrane as a helical span at residues 246–266 (WALRNPGYALVAAVLGWSLGT). Topologically, residues 267–271 (SNAQK) are cytoplasmic. The chain crosses the membrane as a helical span at residues 272 to 286 (VIFTVMILLIAPAYS). At 287 to 739 (IRCVGVENRD…QIFGGMFRTL (453 aa)) the chain is on the extracellular side. 6 disulfides stabilise this stretch: Cys-289-Cys-316, Cys-346-Cys-402, Cys-346-Cys-407, Cys-360-Cys-391, Cys-378-Cys-402, and Cys-378-Cys-407. The interval 384-397 (DRGWGNGCGLFGKG) is fusion peptide. Asn-440 carries an N-linked (GlcNAc...) asparagine; by host glycan. 2 disulfide bridges follow: Cys-476–Cys-574 and Cys-591–Cys-622. The chain crosses the membrane as a helical span at residues 740–760 (FGGMSWFTQIMIGALCCWLGI). Residues 761–766 (NARDRT) are Cytoplasmic-facing. A helical membrane pass occupies residues 767-787 (IAVTFLAVGGVLVFLATSVNA). Residues 788–1165 (DSGCALDLKR…IALQEVMRKR (378 aa)) lie on the Extracellular side of the membrane. Cystine bridges form between Cys-791/Cys-802, Cys-842/Cys-928, Cys-964/Cys-1009, Cys-1066/Cys-1115, Cys-1077/Cys-1098, Cys-1077/Cys-1099, Cys-1098/Cys-1102, and Cys-1099/Cys-1102. Asn-915 carries an N-linked (GlcNAc...) asparagine; by host glycan. A helical membrane pass occupies residues 1166 to 1186 (ILGRHITWMVIAVFMAMILGG). Residues 1187 to 1214 (LSYRDLGRYLVLVGAAFAERNSGGDLLH) lie on the Cytoplasmic side of the membrane. The helical transmembrane segment at 1215 to 1235 (LVLVATFKVKPMALLGFVLGG) threads the bilayer. Topologically, residues 1236-1242 (RWCRRQS) are lumenal. The chain crosses the membrane as a helical span at residues 1243–1263 (LLLSIGAVLVNFALEFQGGYF). Topologically, residues 1264 to 1284 (ELVDSLALALLFVKAVVQTDT) are cytoplasmic. Residues 1285-1305 (TSVSLPLLAALAPAGCYTVLG) form a helical membrane-spanning segment. At 1306 to 1335 (THRFIMLTLVLVTFLGCKKTASVKKAGTAA) the chain is on the lumenal side. A helical membrane pass occupies residues 1336–1356 (VGVVLGMVGMKTIPMLGMLMV). Residues 1357–1363 (TSRARRS) are Cytoplasmic-facing. A helical membrane pass occupies residues 1364–1384 (WPLHEAMAAVGILCALFGALA). Residues 1385 to 1387 (ETE) lie on the Lumenal side of the membrane. A helical membrane pass occupies residues 1388–1408 (VDLAGPLAAAGLIVMAYVISG). The Cytoplasmic segment spans residues 1409-1464 (RSNDLSIKKVEDVKWSDEAEVTGESVSYHVSLDVRGDPTLTEDSGPGLEKVLLKVG). The segment at 1415–1454 (IKKVEDVKWSDEAEVTGESVSYHVSLDVRGDPTLTEDSGP) is interacts with and activates NS3 protease. Residues 1465–1485 (LMAISGIYPVAIPFALGAWFF) constitute an intramembrane region (helical). Topologically, residues 1486-2158 (LEKRCKRAGA…KAALENSPEM (673 aa)) are cytoplasmic. In terms of domain architecture, Peptidase S7 spans 1493-1670 (AGALWDIPSP…ENVGQEDGAE (178 aa)). Catalysis depends on charge relay system; for serine protease NS3 activity residues His-1543, Asp-1567, and Ser-1627. Residues 1673-1829 (DNWFRKRELT…PSNSPIIDEE (157 aa)) form the Helicase ATP-binding domain. An important for RNA-binding region spans residues 1677–1680 (RKRE). 1686-1693 (LHPGAGKT) is an ATP binding site. Residues 1777 to 1780 (DEAH) carry the DEAH box motif. The Helicase C-terminal domain occupies 1839–2006 (SGYEWIIEFD…QLYTPEREKT (168 aa)). Lys-1881 bears the N6-acetyllysine; by host mark. The regulates the ATPase activity of NS3 helicase stretch occupies residues 2153 to 2157 (ENSPE). Residues 2159–2179 (IETFLLCALVCLMTIGLVVVL) form a helical membrane-spanning segment. The Lumenal segment spans residues 2180-2185 (VRGKGP). An intramembrane region (helical) is located at residues 2186 to 2205 (GKLAFGMVSIGVMTWLLWSA). Gly-2206 is a topological domain (lumenal). A helical membrane pass occupies residues 2207 to 2227 (VDPGKIAAAVILVFLLLVVLI). Residues 2228-2242 (PEPEKQRSVQDNQLA) lie on the Cytoplasmic side of the membrane. The chain crosses the membrane as a helical span at residues 2243-2257 (MLMLLIATILGGVAA). The Lumenal segment spans residues 2258 to 2293 (NEMGWLEKTKADLSWVVRGRSSTTTPVVELDMKPAT). The helical intramembrane region spans 2294-2314 (AWTLYALATTLLTPLFQHLIV). At 2315-2336 (TKYANISLMAIASQAGTLFSMD) the chain is on the lumenal side. Residues 2337-2357 (SGIPFSSIELSVPLLALGCWT) form a helical membrane-spanning segment. Gln-2358 is a topological domain (cytoplasmic). A helical transmembrane segment spans residues 2359–2379 (ITPCSLILACVLLSTHYAILL). The Lumenal segment spans residues 2380-2420 (PGMQAQAARDAQRRTAAGIMKNAVVDGIVATDIPPLDGAGP). Residues 2421 to 2441 (LTEKKLGQLLLFAAAVTGVVI) form a helical membrane-spanning segment. At 2442–3410 (TRSPRSWSEL…EKRVEFRGVL (969 aa)) the chain is on the cytoplasmic side. An mRNA cap 0-1 NS5-type MT domain is found at 2508–2773 (GGGIGETLGE…DVNLSCGTRA (266 aa)). Ser-2563 contacts S-adenosyl-L-methionine. A Phosphoserine modification is found at Ser-2563. Lys-2568 acts as the For 2'-O-MTase activity in catalysis. Positions 2593, 2594, 2611, 2612, 2638, and 2639 each coordinate S-adenosyl-L-methionine. The active-site For 2'-O-MTase activity is the Asp-2653. Ile-2654 is a binding site for S-adenosyl-L-methionine. Catalysis depends on for 2'-O-MTase activity residues Lys-2690 and Glu-2726. Tyr-2728 serves as a coordination point for S-adenosyl-L-methionine. Positions 2947, 2951, 2956, and 2959 each coordinate Zn(2+). Positions 3036–3187 (GILYADDTAG…AAPDARFGAA (152 aa)) constitute a RdRp catalytic domain. Zn(2+) is bound by residues His-3222, Cys-3238, and Cys-3356.

In the N-terminal section; belongs to the class I-like SAM-binding methyltransferase superfamily. mRNA cap 0-1 NS5-type methyltransferase family. In terms of assembly, homodimer. Interacts (via N-terminus) with host EXOC1 (via C-terminus); this interaction results in EXOC1 degradation through the proteasome degradation pathway. Forms heterodimers with envelope protein E in the endoplasmic reticulum and Golgi. As to quaternary structure, homodimer; in the endoplasmic reticulum and Golgi. Interacts with protein prM. Interacts with non-structural protein 1. In terms of assembly, homodimer; Homohexamer when secreted. Interacts with envelope protein E. NS1 interacts with NS4B. Interacts with host complement protein CFH; this interaction leads to the degradation of C3. Interacts (via N-terminus) with serine protease NS3. As to quaternary structure, forms a heterodimer with serine protease NS3. May form homooligomers. In terms of assembly, forms a heterodimer with NS2B. Interacts with non-structural protein 2A (via N-terminus). Interacts with NS4B. Interacts with unphosphorylated RNA-directed RNA polymerase NS5; this interaction stimulates RNA-directed RNA polymerase NS5 guanylyltransferase activity. Interacts with serine protease NS3. As to quaternary structure, homodimer. Interacts with host STAT2; this interaction inhibits the phosphorylation of the latter, and, when all viral proteins are present (polyprotein), targets STAT2 for degradation. Specific enzymatic cleavages in vivo yield mature proteins. Cleavages in the lumen of endoplasmic reticulum are performed by host signal peptidase, whereas cleavages in the cytoplasmic side are performed by serine protease NS3. Signal cleavage at the 2K-4B site requires a prior NS3 protease-mediated cleavage at the 4A-2K site. In terms of processing, cleaved in post-Golgi vesicles by a host furin, releasing the mature small envelope protein M, and peptide pr. This cleavage is incomplete as up to 30% of viral particles still carry uncleaved prM. Post-translationally, N-glycosylated. N-glycosylated. The excreted form is glycosylated and this is required for efficient secretion of the protein from infected cells. In terms of processing, acetylated by host KAT5. Acetylation modulates NS3 RNA-binding and unwinding activities and plays an important positive role for viral replication. Post-translationally, phosphorylated on serines residues. This phosphorylation may trigger NS5 nuclear localization.

It localises to the virion. It is found in the host nucleus. Its subcellular location is the host cytoplasm. The protein resides in the host perinuclear region. The protein localises to the secreted. It localises to the virion membrane. It is found in the host endoplasmic reticulum membrane. The catalysed reaction is Selective hydrolysis of -Xaa-Xaa-|-Yaa- bonds in which each of the Xaa can be either Arg or Lys and Yaa can be either Ser or Ala.. The enzyme catalyses RNA(n) + a ribonucleoside 5'-triphosphate = RNA(n+1) + diphosphate. It carries out the reaction a ribonucleoside 5'-triphosphate + H2O = a ribonucleoside 5'-diphosphate + phosphate + H(+). It catalyses the reaction ATP + H2O = ADP + phosphate + H(+). The catalysed reaction is a 5'-end (5'-triphosphoguanosine)-ribonucleoside in mRNA + S-adenosyl-L-methionine = a 5'-end (N(7)-methyl 5'-triphosphoguanosine)-ribonucleoside in mRNA + S-adenosyl-L-homocysteine. The enzyme catalyses a 5'-end (N(7)-methyl 5'-triphosphoguanosine)-ribonucleoside in mRNA + S-adenosyl-L-methionine = a 5'-end (N(7)-methyl 5'-triphosphoguanosine)-(2'-O-methyl-ribonucleoside) in mRNA + S-adenosyl-L-homocysteine + H(+). In terms of biological role, plays a role in virus budding by binding to the cell membrane and gathering the viral RNA into a nucleocapsid that forms the core of a mature virus particle. During virus entry, may induce genome penetration into the host cytoplasm after hemifusion induced by the surface proteins. Can migrate to the cell nucleus where it modulates host functions. Overcomes the anti-viral effects of host EXOC1 by sequestering and degrading the latter through the proteasome degradation pathway. Functionally, inhibits RNA silencing by interfering with host Dicer. Prevents premature fusion activity of envelope proteins in trans-Golgi by binding to envelope protein E at pH6.0. After virion release in extracellular space, gets dissociated from E dimers. Its function is as follows. Acts as a chaperone for envelope protein E during intracellular virion assembly by masking and inactivating envelope protein E fusion peptide. prM is the only viral peptide matured by host furin in the trans-Golgi network probably to avoid catastrophic activation of the viral fusion activity in acidic Golgi compartment prior to virion release. prM-E cleavage is inefficient, and many virions are only partially matured. These uncleaved prM would play a role in immune evasion. In terms of biological role, may play a role in virus budding. Exerts cytotoxic effects by activating a mitochondrial apoptotic pathway through M ectodomain. May display a viroporin activity. Functionally, binds to host cell surface receptor and mediates fusion between viral and cellular membranes. Envelope protein is synthesized in the endoplasmic reticulum in the form of heterodimer with protein prM. They play a role in virion budding in the ER, and the newly formed immature particle is covered with 60 spikes composed of heterodimer between precursor prM and envelope protein E. The virion is transported to the Golgi apparatus where the low pH causes dissociation of PrM-E heterodimers and formation of E homodimers. prM-E cleavage is inefficient, and many virions are only partially matured. These uncleaved prM would play a role in immune evasion. Involved in immune evasion, pathogenesis and viral replication. Once cleaved off the polyprotein, is targeted to three destinations: the viral replication cycle, the plasma membrane and the extracellular compartment. Essential for viral replication. Required for formation of the replication complex and recruitment of other non-structural proteins to the ER-derived membrane structures. Excreted as a hexameric lipoparticle that plays a role against host immune response. Antagonizing the complement function. Binds to the host macrophages and dendritic cells. Inhibits signal transduction originating from Toll-like receptor 3 (TLR3). Its function is as follows. Component of the viral RNA replication complex that functions in virion assembly and antagonizes the host alpha/beta interferon antiviral response. In terms of biological role, required cofactor for the serine protease function of NS3. May have membrane-destabilizing activity and form viroporins. Functionally, displays three enzymatic activities: serine protease, NTPase and RNA helicase. NS3 serine protease, in association with NS2B, performs its autocleavage and cleaves the polyprotein at dibasic sites in the cytoplasm: C-prM, NS2A-NS2B, NS2B-NS3, NS3-NS4A, NS4A-2K and NS4B-NS5. NS3 RNA helicase binds RNA and unwinds dsRNA in the 3' to 5' direction. Regulates the ATPase activity of the NS3 helicase activity. NS4A allows NS3 helicase to conserve energy during unwinding. Its function is as follows. Functions as a signal peptide for NS4B and is required for the interferon antagonism activity of the latter. In terms of biological role, induces the formation of ER-derived membrane vesicles where the viral replication takes place. Inhibits interferon (IFN)-induced host STAT1 phosphorylation and nuclear translocation, thereby preventing the establishment of cellular antiviral state by blocking the IFN-alpha/beta pathway. Inhibits STAT2 translocation in the nucleus after IFN-alpha treatment. Functionally, replicates the viral (+) and (-) RNA genome, and performs the capping of genomes in the cytoplasm. NS5 methylates viral RNA cap at guanine N-7 and ribose 2'-O positions. Besides its role in RNA genome replication, also prevents the establishment of cellular antiviral state by blocking the interferon-alpha/beta (IFN-alpha/beta) signaling pathway. Inhibits host TYK2 and STAT2 phosphorylation, thereby preventing activation of JAK-STAT signaling pathway. This Kokobera virus (KOKV) protein is Genome polyprotein.